The chain runs to 308 residues: Elongation factor Ts (308 aa).

Residues 80–83 (TDFV) are involved in Mg(2+) ion dislocation from EF-Tu.

Belongs to the EF-Ts family.

Its subcellular location is the cytoplasm. In terms of biological role, associates with the EF-Tu.GDP complex and induces the exchange of GDP to GTP. It remains bound to the aminoacyl-tRNA.EF-Tu.GTP complex up to the GTP hydrolysis stage on the ribosome. This chain is Elongation factor Ts, found in Rhizobium etli (strain CIAT 652).